A 134-amino-acid chain; its full sequence is Profilin (134 aa).

Belongs to the profilin family. Occurs in many kinds of cells as a complex with monomeric actin in a 1:1 ratio.

It is found in the cytoplasm. Its subcellular location is the cytoskeleton. In terms of biological role, binds to actin and affects the structure of the cytoskeleton. At high concentrations, profilin prevents the polymerization of actin, whereas it enhances it at low concentrations. By binding to PIP2, it inhibits the formation of IP3 and DG. The chain is Profilin from Apium graveolens (Celery).